The primary structure comprises 224 residues: Outer envelope pore protein 24, chloroplastic (224 aa).

Position 1 (Met-1) is a topological domain, cytoplasmic. The beta stranded transmembrane segment at 2–11 (KATVKGRYEG) threads the bilayer. The Chloroplast intermembrane portion of the chain corresponds to 12 to 16 (DKATA). The chain crosses the membrane as a beta stranded span at residues 17 to 28 (AATLAFTPSAAD). Over 29–32 (LRFK) the chain is Cytoplasmic. Residues 33 to 42 (ASATDAAFAR) form a beta stranded membrane-spanning segment. Residues 43-55 (GPSLEGLILTLEK) lie on the Chloroplast intermembrane side of the membrane. The beta stranded transmembrane segment at 56 to 64 (PGSFLLDLK) threads the bilayer. At 65 to 70 (PHSKDV) the chain is on the cytoplasmic side. Residues 71–80 (RFQFMNSALL) traverse the membrane as a beta stranded segment. Residues 81–101 (LDRRVSLTYTHSTTLSPGPAK) lie on the Chloroplast intermembrane side of the membrane. The chain crosses the membrane as a beta stranded span at residues 102–111 (LPARTALDGS). The Cytoplasmic segment spans residues 112 to 116 (LTFDP). Residues 117 to 126 (ANKLSLSHTL) form a beta stranded membrane-spanning segment. The Chloroplast intermembrane segment spans residues 127-130 (GSSG). Residues 131–140 (CRVKYSYAHG) form a beta stranded membrane-spanning segment. Topologically, residues 141–154 (QDRLTTIEPCFDTA) are cytoplasmic. Residues 155-166 (NNAWDFAVTRKF) traverse the membrane as a beta stranded segment. Topologically, residues 167–169 (QGG) are chloroplast intermembrane. Residues 170–178 (DAIKATYQA) traverse the membrane as a beta stranded segment. Residues 179-180 (ST) are Cytoplasmic-facing. Residues 181–189 (KLLALDWTR) form a beta stranded membrane-spanning segment. The Chloroplast intermembrane portion of the chain corresponds to 190–212 (DSKIGASFKVAASFDLSDQSKAP). The beta stranded transmembrane segment at 213–222 (KLIAESTWNY) threads the bilayer. The Cytoplasmic portion of the chain corresponds to 223–224 (EI).

It belongs to the plastid outer envelope porin OEP24 (TC 1.B.28.1) family. In terms of assembly, homooligomers form large rather nonselective pores in plastidial outer membranes.

It is found in the plastid. The protein resides in the etioplast membrane. The protein localises to the chloroplast outer membrane. Functionally, high-conductance voltage-dependent solute channel with a slight selectivity for cations transporting triosephosphates, dicarboxylic acids, ATP, inorganic phosphate (Pi), sugars, and positively or negatively charged amino acids. The polypeptide is Outer envelope pore protein 24, chloroplastic (OEP24) (Oryza sativa subsp. japonica (Rice)).